The sequence spans 365 residues: Class I histocompatibility antigen, Gogo-A*0401 alpha chain (365 aa).

An N-terminal signal peptide occupies residues 1–24 (MAVMAPRTLVLLLSGALALTQTWA). The interval 25 to 114 (GSHSMRYFYT…LRGYYNQSED (90 aa)) is alpha-1. Residues 25-308 (GSHSMRYFYT…EPSSQPTIPI (284 aa)) are Extracellular-facing. Residue Asn110 is glycosylated (N-linked (GlcNAc...) asparagine). The tract at residues 115 to 206 (GSHTIQRMYG…ENGKETLQLT (92 aa)) is alpha-2. 2 disulfides stabilise this stretch: Cys125–Cys188 and Cys227–Cys283. The tract at residues 207–298 (DAPKTHMTHH…GLPKPLTLRW (92 aa)) is alpha-3. One can recognise an Ig-like C1-type domain in the interval 209–295 (PKTHMTHHPV…QHEGLPKPLT (87 aa)). A connecting peptide region spans residues 299–308 (EPSSQPTIPI). Residues 309 to 332 (VGIIAGLVLFGAVIAGAVVAAVRW) traverse the membrane as a helical segment. Topologically, residues 333-365 (RRKSSDRKGGSYSQAASSDSAQGSDVSLTACKV) are cytoplasmic. The disordered stretch occupies residues 338 to 365 (DRKGGSYSQAASSDSAQGSDVSLTACKV). The segment covering 342 to 359 (GSYSQAASSDSAQGSDVS) has biased composition (low complexity). Ser343 carries the post-translational modification Phosphoserine. Tyr344 is modified (phosphotyrosine). A phosphoserine mark is found at Ser345, Ser349, Ser350, Ser352, Ser356, and Ser359.

This sequence belongs to the MHC class I family. In terms of assembly, heterodimer of an alpha chain and a beta chain (beta-2-microglobulin).

The protein localises to the membrane. In terms of biological role, involved in the presentation of foreign antigens to the immune system. The protein is Class I histocompatibility antigen, Gogo-A*0401 alpha chain of Gorilla gorilla gorilla (Western lowland gorilla).